The following is a 597-amino-acid chain: Putative diflavin flavoprotein A 3 (597 aa).

Residues Q59–H254 are zinc metallo-hydrolase. The region spanning V283–A421 is the Flavodoxin-like domain. The segment at L449 to Y597 is flavodoxin-reductase-like.

In the N-terminal section; belongs to the zinc metallo-hydrolase group 3 family. This sequence in the C-terminal section; belongs to the flavodoxin reductase family. It depends on Fe cation as a cofactor.

Functionally, mediates electron transfer from NADH to oxygen, reducing it to water. This modular protein has 3 redox cofactors, in other organisms the same activity requires 2 or 3 proteins. The chain is Putative diflavin flavoprotein A 3 (dfa3) from Synechocystis sp. (strain ATCC 27184 / PCC 6803 / Kazusa).